A 405-amino-acid chain; its full sequence is MYTPPRWNNKALKWFDERLPVLTVAHKELVVYPAPRNLNYFWNFGSLAGIAMIIMIATGIFLAMSYTAHVDHAFDSVERIMRDVNYGWLMRYMHANGASMFFIVVYVHMFRGLYYGSYKPPREVLWWLGLVILLLMMATAFMGYVLPWGQMSFWGATVITNLFSAIPVVGDDIVTLLWGGFSVDNPTLNRFFSLHYLFPMLLFAVVFLHMWALHVKKSNNPLGIDAKGPFDTIPFHPYYTVKDAFGLGIFLMVFCFFVFFAPNFFGEPDNYIPANPMVTPTHIVPEWYFLPFYAILRAVPDKLGGVLAMFGAILILFVLPWLDTSKVRSATFRPVFKGFFWVFLADCLLLGYLGAMPAEEPYVTITQLATIYYFLHFLVITPLVGWFEKPKPLPVSISSPVTTQA.

Residues 44–64 (FGSLAGIAMIIMIATGIFLAM) traverse the membrane as a helical segment. Residues His-94 and His-108 each coordinate heme b. 8 helical membrane passes run 97–117 (GASM…YYGS), 124–144 (VLWW…FMGY), 163–183 (FSAI…GFSV), 191–211 (FFSL…LHMW), 245–265 (FGLG…PNFF), 303–323 (LGGV…PWLD), 338–358 (GFFW…AMPA), and 368–388 (LATI…GWFE). Heme b is bound by residues His-195 and His-209.

Belongs to the cytochrome b family. The main subunits of complex b-c1 are: cytochrome b, cytochrome c1 and the Rieske protein. Heme b serves as cofactor.

Its subcellular location is the cell membrane. In terms of biological role, component of the ubiquinol-cytochrome c reductase complex (complex III or cytochrome b-c1 complex), which is a respiratory chain that generates an electrochemical potential coupled to ATP synthesis. In Rhodospirillum rubrum, this protein is Cytochrome b (petB).